The following is a 229-amino-acid chain: MASSSLSPATQLGSSRSALMAMSSGLFVKPTKMNHQMVRKEKIGLRISCQASSIPADRVPDMEKRKTLNLLLLGALSLPTGYMLVPYATFFVPPGTGGGGGGTPAKDALGNDVVAAEWLKTHGPGDRTLTQGLKGDPTYLVVENDKTLATYGINAVCTHLGCVVPWNKAENKFLCPCHGSQYNAQGRVVRGPAPLSLALAHADIDEAGKVLFVPWVETDFRTGDAPWWS.

A chloroplast-targeting transit peptide spans 1 to 50 (MASSSLSPATQLGSSRSALMAMSSGLFVKPTKMNHQMVRKEKIGLRISCQ). Residues 68–90 (LNLLLLGALSLPTGYMLVPYATF) form a helical membrane-spanning segment. Positions 115–211 (AAEWLKTHGP…ADIDEAGKVL (97 aa)) constitute a Rieske domain. Cysteine 157, histidine 159, cysteine 175, and histidine 178 together coordinate [2Fe-2S] cluster. A disulfide bridge connects residues cysteine 162 and cysteine 177. Serine 196 bears the Phosphoserine mark.

Belongs to the Rieske iron-sulfur protein family. As to quaternary structure, the 4 large subunits of the cytochrome b6-f complex are cytochrome b6, subunit IV (17 kDa polypeptide, petD), cytochrome f and the Rieske protein, while the 4 small subunits are petG, petL, petM and petN. The complex functions as a dimer. Interacts with PGRL1A. Component of a mitochondrial large protein complex that contains, at least, MIC60, DGS1, TOM40, TOM20 proteins, and petC/RISP. The cofactor is [2Fe-2S] cluster. In terms of tissue distribution, confined to photosynthetic tissues, with highest levels in flowers. In leaves, mostly localized in mesophyll cells. In stems, confined to the peripheral ring of chlorenchyma and adjoining groups of cells associated with the vascular bundles. In siliques, present in green wall of the fruit and in peduncle but not in the translucide white septum of the seeds.

It is found in the plastid. Its subcellular location is the chloroplast thylakoid membrane. The protein resides in the mitochondrion inner membrane. It catalyses the reaction 2 oxidized [plastocyanin] + a plastoquinol + 2 H(+)(in) = 2 reduced [plastocyanin] + a plastoquinone + 4 H(+)(out). Functionally, essential protein for photoautotrophism. Confers resistance to photo-oxidative damages by contributing to the thermal dissipation of light energy and to lumenal acidification (increase of pH gradient). Component of the cytochrome b6-f complex, which mediates electron transfer between photosystem II (PSII) and photosystem I (PSI), cyclic electron flow around PSI, and state transitions. This is Cytochrome b6-f complex iron-sulfur subunit, chloroplastic from Arabidopsis thaliana (Mouse-ear cress).